The sequence spans 372 residues: Phospho-2-dehydro-3-deoxyheptonate aldolase, tyrosine-inhibited (372 aa).

This sequence belongs to the class-I DAHP synthase family.

It localises to the cytoplasm. Its subcellular location is the nucleus. It carries out the reaction D-erythrose 4-phosphate + phosphoenolpyruvate + H2O = 7-phospho-2-dehydro-3-deoxy-D-arabino-heptonate + phosphate. The protein operates within metabolic intermediate biosynthesis; chorismate biosynthesis; chorismate from D-erythrose 4-phosphate and phosphoenolpyruvate: step 1/7. Its function is as follows. Stereospecific condensation of phosphoenolpyruvate (PEP) and D-erythrose-4-phosphate (E4P) giving rise to 3-deoxy-D-arabino-heptulosonate-7-phosphate (DAHP). The chain is Phospho-2-dehydro-3-deoxyheptonate aldolase, tyrosine-inhibited (aro4) from Schizosaccharomyces pombe (strain 972 / ATCC 24843) (Fission yeast).